Consider the following 285-residue polypeptide: CCR4-NOT transcription complex subunit 7 (285 aa).

Residues Asp-40, Glu-42, Asp-161, Asp-230, and Glu-278 each contribute to the a divalent metal cation site.

Belongs to the CAF1 family. In terms of assembly, component of the CCR4-NOT complex. Mn(2+) is required as a cofactor. The cofactor is Mg(2+). Requires Co(2+) as cofactor.

It is found in the nucleus. The protein resides in the cytoplasm. It catalyses the reaction Exonucleolytic cleavage of poly(A) to 5'-AMP.. Its function is as follows. Has 3'-5' poly(A) exoribonuclease activity for synthetic poly(A) RNA substrate. Catalytic component of the CCR4-NOT complex which is one of the major cellular mRNA deadenylases and is linked to various cellular processes including bulk mRNA degradation, miRNA-mediated repression, translational repression during translational initiation and general transcription regulation. During miRNA-mediated repression the complex also seems to act as translational repressor during translational initiation. Additional complex functions may be a consequence of its influence on mRNA expression. This is CCR4-NOT transcription complex subunit 7 (CNOT7) from Gallus gallus (Chicken).